The sequence spans 1010 residues: Signal peptide, CUB and EGF-like domain-containing protein 2 (1010 aa).

An N-terminal signal peptide occupies residues M1–A24. The EGF-like 1; calcium-binding domain occupies N28–E68. Cystine bridges form between C32–C45, C39–C54, C56–C67, C73–C85, C81–C94, C96–C109, C115–C126, and C122–C135. The EGF-like 2; calcium-binding domain occupies D69–L110. Positions D111–Q147 constitute an EGF-like 3; calcium-binding domain. EGF-like domains follow at residues C160–C196 and C200–C235. An N-linked (GlcNAc...) asparagine glycan is attached at N249. The EGF-like 6 domain maps to C269–C304. In terms of domain architecture, EGF-like 7; calcium-binding spans D306–Q346. 9 cysteine pairs are disulfide-bonded: C310–C321, C317–C330, C332–C345, C351–C361, C357–C370, C372–C384, C390–C401, C397–C410, and C412–C425. An EGF-like 8; calcium-binding domain is found at D347–G385. The EGF-like 9; calcium-binding domain occupies D386 to I426. Residues N488, N703, N774, and N803 are each glycosylated (N-linked (GlcNAc...) asparagine). Residues C822 and C848 are joined by a disulfide bond. The CUB domain occupies C822–Y934. The interval I860–L869 is interaction with the cholesterol-anchor of SHH. The cysteines at positions 875 and 896 are disulfide-linked. An N-linked (GlcNAc...) asparagine glycan is attached at N982.

In terms of assembly, interacts with SHH via the cholesterol anchor of the dually lipid-modified SHH (ShhNp). Interacts with PTCH1. Forms homooligomers and heterooligomers with SCUBE1 and SCUBE3. Interacts with VEGFR2. Post-translationally, N-glycosylated.

The protein resides in the secreted. The protein localises to the cell surface. Lipid-binding protein required for SHH long-range signaling by binding to the dually lipid-modified SHH (ShhNp) and by promoting ShhNp mobilization, solubilization and release from the cell membrane. Acts by enhancing the proteolytic processing (shedding) of the lipid-modified N- and C- terminal of ShhNp at the cell surface. Synergizes with DISP1 to cause an increase in SHH secretion. Probable cell surface coreceptor for VEGFR2 involved in VEGFR2-mediated angiogenesis. This chain is Signal peptide, CUB and EGF-like domain-containing protein 2 (scube2), found in Danio rerio (Zebrafish).